We begin with the raw amino-acid sequence, 559 residues long: Protein aurora borealis (559 aa).

The interval 1-27 (MGDVKESKMQITPETPGRIPVLNPFES) is disordered. Residues Ser183, Ser191, Ser270, Ser325, and Ser331 each carry the phosphoserine modification. Phosphothreonine is present on Thr354.

Belongs to the BORA family. In terms of assembly, interacts with AURKA. Phosphorylated by AURKA.

Its function is as follows. Required for the activation of AURKA at the onset of mitosis. This chain is Protein aurora borealis (BORA), found in Homo sapiens (Human).